The chain runs to 556 residues: Undecaprenyl phosphate-alpha-4-amino-4-deoxy-L-arabinose arabinosyl transferase (556 aa).

11 helical membrane-spanning segments follow: residues 5 to 25 (MIKL…LLPL), 88 to 108 (FASV…ALLL), 116 to 136 (LLAA…TYSV), 179 to 199 (FMTK…PVAL), 207 to 227 (LLLF…PWAL), 258 to 278 (APFW…LALL), 296 to 316 (FLLL…KGKL), 319 to 339 (YILP…SGLA), 355 to 375 (LAFG…IIMP), 384 to 404 (LTIV…AVSL), and 410 to 430 (WGYL…GSIP).

The protein belongs to the glycosyltransferase 83 family.

It is found in the cell inner membrane. It catalyses the reaction 4-amino-4-deoxy-alpha-L-arabinopyranosyl di-trans,octa-cis-undecaprenyl phosphate + lipid IVA = lipid IIA + di-trans,octa-cis-undecaprenyl phosphate.. The protein operates within lipopolysaccharide metabolism; 4-amino-4-deoxy-beta-L-arabinose-lipid A biosynthesis. Catalyzes the transfer of the L-Ara4N moiety of the glycolipid undecaprenyl phosphate-alpha-L-Ara4N to lipid A. The modified arabinose is attached to lipid A and is required for resistance to polymyxin and cationic antimicrobial peptides. This is Undecaprenyl phosphate-alpha-4-amino-4-deoxy-L-arabinose arabinosyl transferase from Pectobacterium carotovorum subsp. carotovorum (strain PC1).